Here is a 607-residue protein sequence, read N- to C-terminus: Arginine decarboxylase (607 aa).

Lysine 104 bears the N6-(pyridoxal phosphate)lysine mark. 290 to 300 contacts substrate; it reads LDCGGGLGVDY.

It belongs to the Orn/Lys/Arg decarboxylase class-II family. SpeA subfamily. Requires pyridoxal 5'-phosphate as cofactor. The cofactor is Mg(2+).

The enzyme catalyses L-arginine + H(+) = agmatine + CO2. It participates in amine and polyamine biosynthesis; agmatine biosynthesis; agmatine from L-arginine: step 1/1. This is Arginine decarboxylase (SPE1) from Avena sativa (Oat).